Reading from the N-terminus, the 197-residue chain is MAKMMGPRFKMCRRLGLNVVGHPKAMKRAGRGTSRADKKLSDYGIQLLEKQRLRAYYGVMERQFTRYVDQAFNSKEQPGEALLMILESRLDNMVYRMGFASSIRQARQMVNHGHFLVNGKKVNIPSFRLNIGDEVVLREKSRKTEMFVNNFKDSIGSEVPYVSKEEDNFKGIFTRKPKREEIPITIQEQLIVEFYSK.

Positions 88–150 (SRLDNMVYRM…SRKTEMFVNN (63 aa)) constitute an S4 RNA-binding domain.

The protein belongs to the universal ribosomal protein uS4 family. In terms of assembly, part of the 30S ribosomal subunit. Contacts protein S5. The interaction surface between S4 and S5 is involved in control of translational fidelity.

Its function is as follows. One of the primary rRNA binding proteins, it binds directly to 16S rRNA where it nucleates assembly of the body of the 30S subunit. Functionally, with S5 and S12 plays an important role in translational accuracy. In Clostridium perfringens (strain 13 / Type A), this protein is Small ribosomal subunit protein uS4B (rpsD2).